The chain runs to 434 residues: Histidinol dehydrogenase (434 aa).

Residues Tyr-130, Gln-188, and Asn-211 each contribute to the NAD(+) site. 3 residues coordinate substrate: Ser-237, Gln-259, and His-262. Residues Gln-259 and His-262 each coordinate Zn(2+). Active-site proton acceptor residues include Glu-326 and His-327. Substrate is bound by residues His-327, Asp-360, Glu-414, and His-419. Asp-360 serves as a coordination point for Zn(2+). His-419 lines the Zn(2+) pocket.

Belongs to the histidinol dehydrogenase family. In terms of assembly, homodimer. Zn(2+) serves as cofactor.

It catalyses the reaction L-histidinol + 2 NAD(+) + H2O = L-histidine + 2 NADH + 3 H(+). It participates in amino-acid biosynthesis; L-histidine biosynthesis; L-histidine from 5-phospho-alpha-D-ribose 1-diphosphate: step 9/9. Functionally, catalyzes the sequential NAD-dependent oxidations of L-histidinol to L-histidinaldehyde and then to L-histidine. The sequence is that of Histidinol dehydrogenase from Escherichia coli (strain K12).